Consider the following 142-residue polypeptide: DNA-directed RNA polymerase subunit omega (142 aa).

The tract at residues 93 to 142 (AWSVPEAGGDEGGDASELLDDEGEGAAAGAEPDFSEMDVPLADLADEDKI) is disordered. The span at 100–116 (GGDEGGDASELLDDEGE) shows a compositional bias: acidic residues.

It belongs to the RNA polymerase subunit omega family. In terms of assembly, the RNAP catalytic core consists of 2 alpha, 1 beta, 1 beta' and 1 omega subunit. When a sigma factor is associated with the core the holoenzyme is formed, which can initiate transcription.

The catalysed reaction is RNA(n) + a ribonucleoside 5'-triphosphate = RNA(n+1) + diphosphate. Functionally, promotes RNA polymerase assembly. Latches the N- and C-terminal regions of the beta' subunit thereby facilitating its interaction with the beta and alpha subunits. In Rhodospirillum centenum (strain ATCC 51521 / SW), this protein is DNA-directed RNA polymerase subunit omega.